The following is a 380-amino-acid chain: Omega-3 fatty acid desaturase, endoplasmic reticulum (380 aa).

The helical transmembrane segment at 59–78 threads the bilayer; sequence VLVVTALAASAISFNSWFFW. A Histidine box-1 motif is present at residues 97 to 101; it reads HDCGH. Positions 133–137 match the Histidine box-2 motif; the sequence is HRTHH. 2 helical membrane-spanning segments follow: residues 208 to 231 and 238 to 256; these read GVVTSTLCWGIVLSVLLYLSLTIG and LYGVPYLIFVMWLDFVTYL. A Histidine box-3 motif is present at residues 300–304; it reads HVIHH.

Belongs to the fatty acid desaturase type 1 family.

It localises to the endoplasmic reticulum membrane. It participates in lipid metabolism; polyunsaturated fatty acid biosynthesis. In terms of biological role, microsomal (ER) omega-3 fatty acid desaturase introduces the third double bond in the biosynthesis of 18:3 fatty acids, important constituents of plant membranes. It is thought to use cytochrome b5 as an electron donor and to act on fatty acids esterified to phosphatidylcholine and, possibly, other phospholipids. The polypeptide is Omega-3 fatty acid desaturase, endoplasmic reticulum (ARG1) (Vigna radiata var. radiata (Mung bean)).